The primary structure comprises 105 residues: uncharacterized protein (105 aa).

Over 1–48 (MAPKAFFVCLPWVLPRHALIVRQAGNPYHFLAYTNPRAPGKLQDSHCP) the chain is Extracellular. Residues 49–69 (VFFMGIIIITIITVTLAIIII) form a helical membrane-spanning segment. A topological domain (cytoplasmic) is located at residue Asn-70. The helical transmembrane segment at 71-91 (IIFLTLFDDGMCFYCSLLTFS) threads the bilayer. Topologically, residues 92-105 (FVSFNFDHFDHFDL) are extracellular.

Its subcellular location is the membrane. This is an uncharacterized protein from Saccharomyces cerevisiae (strain ATCC 204508 / S288c) (Baker's yeast).